The primary structure comprises 493 residues: Glutamate--tRNA ligase (493 aa).

Positions Pro10–Thr20 match the 'HIGH' region motif. Residues Lys251–Arg255 carry the 'KMSKS' region motif. An ATP-binding site is contributed by Lys254.

The protein belongs to the class-I aminoacyl-tRNA synthetase family. Glutamate--tRNA ligase type 1 subfamily. In terms of assembly, monomer.

It localises to the cytoplasm. The enzyme catalyses tRNA(Glu) + L-glutamate + ATP = L-glutamyl-tRNA(Glu) + AMP + diphosphate. Catalyzes the attachment of glutamate to tRNA(Glu) in a two-step reaction: glutamate is first activated by ATP to form Glu-AMP and then transferred to the acceptor end of tRNA(Glu). The sequence is that of Glutamate--tRNA ligase from Marinomonas sp. (strain MWYL1).